The primary structure comprises 1164 residues: Phospholipid-transporting ATPase IA (1164 aa).

At 1–65 (MPTMRRTVSE…TAKYNIITFL (65 aa)) the chain is on the cytoplasmic side. A Phosphoserine modification is found at S25. T28 is modified (phosphothreonine). A Phosphoserine modification is found at S29. A helical membrane pass occupies residues 66–86 (PRFLYSQFRRAANSFFLFIAL). Over 87-92 (LQQIPD) the chain is Exoplasmic loop. Residues 93–115 (VSPTGRYTTLVPLLFILAVAAIK) form a helical membrane-spanning segment. The Cytoplasmic segment spans residues 116–297 (EIIEDIKRHK…SNVERITNVQ (182 aa)). The helical transmembrane segment at 298 to 319 (ILILFCILIAMSLVCSVGSAIW) threads the bilayer. The Exoplasmic loop portion of the chain corresponds to 320–344 (NRRHSGKDWYLNLNYGGASNFGLNF). The chain crosses the membrane as a helical span at residues 345–366 (LTFIILFNNLIPISLLVTLEVV). The Cytoplasmic segment spans residues 367-857 (KFTQAYFINW…GAWNYNRVSK (491 aa)). D409 functions as the 4-aspartylphosphate intermediate in the catalytic mechanism. D409, K410, and T411 together coordinate ATP. D409 is a binding site for Mg(2+). T411 provides a ligand contact to Mg(2+). Phosphoserine is present on S443. ATP is bound by residues E508, F549, K572, R605, T685, G686, D687, 741 to 748 (ALIIDGKT), R775, and K781. Residue D801 participates in Mg(2+) binding. 2 residues coordinate ATP: N804 and D805. D805 serves as a coordination point for Mg(2+). Residues 858–878 (CILYCFYKNIVLYIIEIWFAF) traverse the membrane as a helical segment. At 879–890 (VNGFSGQILFER) the chain is on the exoplasmic loop side. Residues 891–910 (WCIGLYNVMFTAMPPLTLGI) form a helical membrane-spanning segment. Over 911–940 (FERSCRKENMLKYPELYKTSQNALDFNTKV) the chain is Cytoplasmic. The helical transmembrane segment at 941–962 (FWVHCLNGLFHSVILFWFPLKA) threads the bilayer. Residues 963 to 976 (LQYGTAFGNGKTSD) lie on the Exoplasmic loop side of the membrane. A helical transmembrane segment spans residues 977-999 (YLLLGNFVYTFVVITVCLKAGLE). Topologically, residues 1000-1005 (TSYWTW) are cytoplasmic. A helical transmembrane segment spans residues 1006–1026 (FSHIAIWGSIALWVVFFGIYS). Topologically, residues 1027-1044 (SLWPAIPMAPDMSGEAAM) are exoplasmic loop. The helical transmembrane segment at 1045 to 1070 (LFSSGVFWMGLLFIPVASLLLDVVYK) threads the bilayer. Topologically, residues 1071-1164 (VIKRTAFKTL…DTTKQRPDEW (94 aa)) are cytoplasmic. 1095–1102 (GAVVLGKS) is a binding site for ATP. S1126 is modified (phosphoserine).

It belongs to the cation transport ATPase (P-type) (TC 3.A.3) family. Type IV subfamily. In terms of assembly, component of a P4-ATPase flippase complex which consists of a catalytic alpha subunit and an accessory beta subunit. Interacts with TMEM30A to form a flippase complex; this complex forms an intermediate phosphoenzyme. Interacts with TMEM30B; this interaction is reported conflictingly. It depends on Mg(2+) as a cofactor. In terms of processing, cleaved by calpain in a caspase- and calcium influx-dependent manner during platelet apoptosis leading to a 100 kDa polypeptide. In terms of tissue distribution, found in most adult tissues except liver, testis and placenta. Most abundant in heart, brain and skeletal muscle. Also detected in fetal tissues. Isoform 1 is only detected in brain, skeletal muscle and heart and is the most abundant form in skeletal muscle. Highly expressed in platelets.

It localises to the cytoplasmic vesicle. The protein resides in the secretory vesicle. The protein localises to the chromaffin granule membrane. Its subcellular location is the cytoplasmic granule. It is found in the cell membrane. It localises to the endoplasmic reticulum. The protein resides in the golgi apparatus. It catalyses the reaction ATP + H2O + phospholipidSide 1 = ADP + phosphate + phospholipidSide 2.. The catalysed reaction is a 1,2-diacyl-sn-glycero-3-phospho-L-serine(out) + ATP + H2O = a 1,2-diacyl-sn-glycero-3-phospho-L-serine(in) + ADP + phosphate + H(+). ATPase activity is stimulated by phosphatidylserine (PS) and minimally by phosphatidylethanolamine (PE). ATPase activity is inhibited by beryllium fluoride and aluminum trifluoride. In terms of biological role, catalytic component of a P4-ATPase flippase complex which catalyzes the hydrolysis of ATP coupled to the transport of aminophospholipids from the outer to the inner leaflet of various membranes and ensures the maintenance of asymmetric distribution of phospholipids. Phospholipid translocation also seems to be implicated in vesicle formation and in uptake of lipid signaling molecules. In vitro, its ATPase activity is selectively and stereospecifically stimulated by phosphatidylserine (PS). The flippase complex ATP8A1:TMEM30A seems to play a role in regulation of cell migration probably involving flippase-mediated translocation of phosphatidylethanolamine (PE) at the cell membrane. Acts as aminophospholipid translocase at the cell membrane in neuronal cells. This is Phospholipid-transporting ATPase IA from Homo sapiens (Human).